Here is a 1171-residue protein sequence, read N- to C-terminus: MSLTVYMNHGQIDMRHALLSHAHEALNQDNNLTVYYIVPNHVKFDSEVDVLRRFARLTGQNPDTSLYAQSRLQVYSLSRLTWALLKDMATMQPNVIQGTGLFIMVSDILRDYAAQLPIFARMQSKAGFVTTLVAQLVELRASRISPEDLLTILNQESDDDTFLRQTLSGKLRDLAIVADALDKKMGHTYITQQEVLSFFATQLATTQLKNVAFYFDGFNGFTSPETQVMIELMARYPVTVALLGDVEKLGSQQPGDLFYKPMTTAQRLAQFTKIANQQVVWQVPTQARCLDESIISVMSAWEKLGEYRQFNSENKKTNLAAFVAENTMVEIQEVARRIRQLLVAQPDLRLRDILILARDLTPYTGHIPEVMQQFDLPYFLDTDQKMTNHPLVELLLNLLRPAKERFQYQQVMAILKTGLLRPYTDGSLVPEGDFFDIVSYLDNYLYANQPFERTWRDLDHPFTLFTVSEDEDDEDARVVLDDKTVNRRIETLRRFVIDAFDSLQQQLNQAQTMRQAATLIILWLEKYHVTEAILSQRDTLLAAGELSRSREGEEVWEMMTQTLDDIVAIDGDERFELEKFKAILVAGFEGATFSGIPNNLDQLTISEAGIVQSNDYQYLFFIGGTRNNLPAQLKSRALINDAERLIVQPALQENSTPKYLQNTAQQQMAEENLLFYGALTAATKNIVLSYPALDAGGQISDMSPFFKRLVDAFNITVNKVTATPATSQALLKYYVGSVRSTLGELVKIAASQQQTSAYQALRNTINQSEPERLERVLSAPNYKNQTETLKPELVQALFGETLNMSISQLESYYNNPLAYFLQYGLALKERLTNRLNVAQTGTLYHAVFEGVVQQLIIQQLSLRDISQKALQQLVADNMAEITAQPAYQMLQETGKMRATQHYLAKVSEILAVNMQRAARVNHAQPKAVERLFGFPNRQSLPALVVSTPQATVHLRGKIDRLDSQDPSQVYGTIIDYKSNGKHFDWGQAYDGRQMQLLTYWQAAQLSAEQLGIEAIGGAFFAKIAPEKLTIKDFKGDVRAMLRGEIKPEQFKYRGLFISEPAYIDSLETLAEGEGSQFYQLKKKANGELYANSDVISPEDFELLLKRNLDNIQRASAAILSGDFPLSPAEGSLQFTPFTDVLRFDRALGDQYKNNTPKNKSDILKLLKADEE.

The protein belongs to the helicase family. AddB/RexB type 2 subfamily. In terms of assembly, heterodimer of AddA and RexB. Requires Mg(2+) as cofactor.

The heterodimer acts as both an ATP-dependent DNA helicase and an ATP-dependent, dual-direction single-stranded exonuclease. Recognizes the chi site generating a DNA molecule suitable for the initiation of homologous recombination. This subunit has 5' -&gt; 3' nuclease activity but not helicase activity. This chain is ATP-dependent helicase/deoxyribonuclease subunit B, found in Leuconostoc citreum (strain KM20).